Reading from the N-terminus, the 22-residue chain is Conantokin-Oc (22 aa).

The interval 1-22 is disordered; that stretch reads GEEERKAMAELEAKKAQEALKA. Residues Glu-3, Glu-4, Glu-10, and Glu-18 each carry the 4-carboxyglutamate modification.

In terms of tissue distribution, expressed by the venom duct.

The protein localises to the secreted. Its function is as follows. Conantokins inhibit N-methyl-D-aspartate (NMDA) receptors. The sequence is that of Conantokin-Oc from Conus ochroleucus (Perfect cone).